The following is a 698-amino-acid chain: Zinc finger CCCH domain-containing protein 7 (698 aa).

Residues 1-11 (MEEPSPVPPAA) show a composition bias toward pro residues. Disordered stretches follow at residues 1–23 (MEEPSPVPPAAAPASLAAAPPTT), 56–95 (HAARPDAEVEPAAAAAIPPGGSGGLPHGDSPPPADVGGDR), 109–137 (APHETPSTSASPDAAVNPTTDPGVVPQGT), and 272–300 (GSLDGGGGFEEGEIEGDTQNLDADDSGNS). Low complexity-rich tracts occupy residues 12–21 (APASLAAAPP) and 65–74 (EPAAAAAIPP). The segment covering 281 to 300 (EEGEIEGDTQNLDADDSGNS) has biased composition (acidic residues). C3H1-type zinc fingers lie at residues 429-456 (PKVVKVCHFYLHGKCQQGNLCKFSHDTT), 458-485 (LTKSKPCTHYARGSCLKGDDCPYDHELS), and 486-511 (KYPCHNFMENGMCIRGDKCKFSHVIP). 2 disordered regions span residues 512–553 (TAEG…GEPA) and 607–682 (TEKH…QHEV). Composition is skewed to polar residues over residues 535 to 548 (CQEQTSRQKTSTVY) and 665 to 680 (SLPTTAAVPSSVSTQH).

The polypeptide is Zinc finger CCCH domain-containing protein 7 (Oryza sativa subsp. japonica (Rice)).